A 669-amino-acid chain; its full sequence is Major S-layer protein (669 aa).

Positions 1–24 are cleaved as a signal peptide; the sequence is MKRFAAVSLAALMLLTVFASAASA. Residues N36, N70, N116, N600, and N607 are each glycosylated (N-linked (GlcNAc...) asparagine). Residues 588 to 648 form a disordered region; it reads DGEVVDDDED…PTEADGTTPG (61 aa). Positions 590–627 are enriched in acidic residues; sequence EVVDDDEDDDNVTEPVDNDTEVEEPTEEPTEGPTEEPT. The helical transmembrane segment at 645-665 threads the bilayer; it reads TTPGFGVVLGLVGLLAVVYLV.

It belongs to the Methanosarcinales S-layer protein family. Post-translationally, glycosylated.

It localises to the secreted. Its subcellular location is the cell wall. The protein localises to the S-layer. It is found in the cell membrane. Its function is as follows. S-layer protein. The S-layer is a paracrystalline mono-layered assembly of proteins which coat the surface of the cell. This Methanosarcina mazei (strain ATCC BAA-159 / DSM 3647 / Goe1 / Go1 / JCM 11833 / OCM 88) (Methanosarcina frisia) protein is Major S-layer protein.